Here is a 458-residue protein sequence, read N- to C-terminus: Opine oxidase subunit A (458 aa).

The protein to T-protein and to dimethylglycine dehydrogenase. Heterodimer of a subunit A and a subunit B.

It participates in opine metabolism; octopine degradation. Functionally, oxidative cleavage of octopine into L-arginine and pyruvate. This Rhizobium meliloti (strain 1021) (Ensifer meliloti) protein is Opine oxidase subunit A (ooxA).